The primary structure comprises 1935 residues: MGDAELAVFGSAAPYLRKTEKERLEDQTRPFDLKKDVFVPDDKEEFVKAKIISREGGKITAETEHGKTVTVKEDQVLQQNPPKFDKIEDMAMLTFLHEPAVLYNLKDRYAAWMIYTYSGLFCVTINPYKWLPVYTAEVVAAYRGKKRSEAPPHIFSISDNAYQYMLTDRENQSILITGESGAGKTVNTKRVIQYFAVIAAIGDRSKKDQTSGKGTLEDQIIEANPALEAFGNAKTVRNDNSSRFGKFIRIHFGATGKLASADIETYLLEKSRVIFQLKAERDYHIFYQILSNKKPELLDMLLITNNPYDYAFISQGETTVASIDDAEELMATDNAFDVLGFTSEEKNSMYKLTGAIMHFGNMKFKQKQREEQAEPDGTEEADKSAYLMGLNSADLLKGLCHPRVKVGNEYVTKGQNVQQVAYAKGALAKAVYERMFNWMVARINATLETKQPRQYFIGVLDIAGFEIFDFNSFEQLCINFTNEKLQQFFNHHMFVLEQEEYKKEGIEWEFIDFGMDLQACIDLIEKPMGIMSILEEECMFPKATDMTFKAKLFDNHLGKSSNFQKPRNIKGKPEAHFSLIHYAGTVDYNILGWLQKNKDPLNETVVDLYKKSSLKMLSNLFANYLGADAPIEKGKGKAKKGSSFQTVSALHRENLNKLMTNLRSTHPHFVRCIIPNETKSPGVIDNPLVMHQLRCNGVLEGIRICRKGFPNRILYGDFRQRYRILNPAAIPEGQFIDSRKGAEKLLSSLDIDHNQYRFGHTKVFFKAGLLGLLEEMRDERLSRIITRIQAQSRGVLARMEFKKLLERRDSLLIIQWNIRAFMGVKNWPWMKLYFKIKPLLKSAETEKEMATMKEEFARLKEALEKSEARRKELEEKMVSLLQEKNDLQLQVQAEQDNLADAEERCDQLIKNKIQLEAKVKEMTERLEDEEEMNAELTAKKRKLEDECSELKRDIDDLELTLAKVEKEKHATENKVKNLTEEMAGLDEIIAKLTKEKKALQEAHQQALDDLQAEEDKVNTLTKAKVKLEQHVDDLEGSLEQEKKVRMDLERAKRKLEGDLKLTQESIMDLENDKQQLDERLKKKDFELNALNARIEDEQALGSQLQKKLKELQARIEELEEELEAERTARAKVEKLRSDLSRELEEISERLEEAGGATSVQIEMNKKREAEFQKMKRDLEEATLQHEATAAALRKKHADSVAELGEQIDNLQRVKQKLEKEKSEFKLELDDVTSNMEQIIKAKANLEKMCRTLEDQMNEHRSKAEETQRSVNDLTSQRAKLQTENGELSRQLDEKEALISQLTRGKLTYTQQLEDLKRQLEEEVKAKNALAHALQSARHDCDLLREQYEEETEAKAELQRVLSKANSEVAQWRTKYETDAIQRTEELEEAKKKLAQRLQDAEEAVEAVNAKCSSLEKTKHRLQNEIEDLMVDVERSNAAAAALDKKQRNFDKILAEWKQKYEESQSELESSQKEARSLSTELFKLKNAYEESLEHLETFKRENKNLQEEISDLTEQLGSSGKTIHELEKVRKQLEAEKLELQSALEEAEASLEHEEGKILRAQLEFNQIKAEIERKLAEKDEEMEQAKRNHLRVVDSLQTSLDAETRSRNEALRVKKKMEGDLNEMEIQLSHANRMAAEAQKQVKSLQSLLKDTQIQLDDAVRANDDLKENIAIVERRNNLLQAELEELRAVVEQTERSRKLAEQELIETSERVQLLHSQNTSLINQKKKMDADLSQLQTEVEEAVQECRDAEEKAKKAITDAAMMAEELKKEQDTSAHLERMKKNMEQTIKDLQHRLDEAEQIALKGGKKQLQKLEARVRELENELEVEQKRNAESIKGMRKSERRIKELTYQTEEDRKNLLRLQDLVDKLQLKVKAYKRQAEEAEEQANTNLSKFRKVQHELDEAEERADIAESQVNKLRAKSRDIGTKGLNEE.

The Myosin N-terminal SH3-like domain occupies 32-81 (DLKKDVFVPDDKEEFVKAKIISREGGKITAETEHGKTVTVKEDQVLQQNP). A Myosin motor domain is found at 85–778 (DKIEDMAMLT…LLGLLEEMRD (694 aa)). K129 is subject to N6,N6,N6-trimethyllysine. ATP is bound at residue 178–185 (GESGAGKT). T378 bears the Phosphothreonine mark. 2 actin-binding regions span residues 655-677 (LNKLMTNLRSTHPHFVRCIIPNE) and 757-771 (RFGHTKVFFKAGLLG). The 30-residue stretch at 781–810 (LSRIITRIQAQSRGVLARMEFKKLLERRDS) folds into the IQ domain. Positions 839-1935 (LLKSAETEKE…DIGTKGLNEE (1097 aa)) form a coiled coil. Phosphoserine occurs at positions 1137 and 1269. A Phosphothreonine modification is found at T1282. Phosphotyrosine is present on Y1308. T1309 carries the phosphothreonine modification. Residue S1510 is modified to Phosphoserine. Position 1513 is a phosphothreonine (T1513). The tract at residues 1907–1935 (EERADIAESQVNKLRAKSRDIGTKGLNEE) is disordered. A compositionally biased stretch (basic and acidic residues) spans 1923 to 1935 (KSRDIGTKGLNEE).

The protein belongs to the TRAFAC class myosin-kinesin ATPase superfamily. Myosin family. In terms of assembly, muscle myosin is a hexameric protein that consists of 2 heavy chain subunits (MHC), 2 alkali light chain subunits (MLC) and 2 regulatory light chain subunits (MLC-2). Interacts with ECPAS. Interacts (via C-terminus) with LRRC39.

It localises to the cytoplasm. The protein localises to the myofibril. Its subcellular location is the sarcomere. In terms of biological role, myosins are actin-based motor molecules with ATPase activity essential for muscle contraction. Forms regular bipolar thick filaments that, together with actin thin filaments, constitute the fundamental contractile unit of skeletal and cardiac muscle. This Equus caballus (Horse) protein is Myosin-7 (MYH7).